Here is a 274-residue protein sequence, read N- to C-terminus: Energy-coupling factor transporter ATP-binding protein EcfA (274 aa).

The region spanning 2–235 (IRLENVSYNY…LSLRYLGLTP (234 aa)) is the ABC transporter domain. An ATP-binding site is contributed by 35 to 42 (GKNGSGKS).

Belongs to the ABC transporter superfamily. Energy-coupling factor EcfA family. As to quaternary structure, forms a stable energy-coupling factor (ECF) transporter complex composed of 2 membrane-embedded substrate-binding proteins (S component), 2 ATP-binding proteins (A component) and 2 transmembrane proteins (T component).

Its subcellular location is the cell membrane. In terms of biological role, ATP-binding (A) component of a common energy-coupling factor (ECF) ABC-transporter complex. Unlike classic ABC transporters this ECF transporter provides the energy necessary to transport a number of different substrates. In Methanosarcina acetivorans (strain ATCC 35395 / DSM 2834 / JCM 12185 / C2A), this protein is Energy-coupling factor transporter ATP-binding protein EcfA.